Consider the following 549-residue polypeptide: Lipase 5 (549 aa).

The first 15 residues, 1 to 15 (MKLALALSLIASVAA), serve as a signal peptide directing secretion. A disulfide bridge links Cys-75 with Cys-112. The active-site Acyl-ester intermediate is the Ser-224. A disulfide bond links Cys-283 and Cys-292. N-linked (GlcNAc...) asparagine glycosylation occurs at Asn-329. The active-site Charge relay system is Glu-356. N-linked (GlcNAc...) asparagine glycosylation is present at Asn-366. His-464 functions as the Charge relay system in the catalytic mechanism.

It belongs to the type-B carboxylesterase/lipase family.

The enzyme catalyses a triacylglycerol + H2O = a diacylglycerol + a fatty acid + H(+). In Diutina rugosa (Yeast), this protein is Lipase 5 (LIP5).